We begin with the raw amino-acid sequence, 435 residues long: MKRRASDRGAGETSAKAQALGTGIAGNNAKRAGPFILGPRLGNSPVPSIVQCLARKDGTDDFYQLKILTLEERGEQGIESQEERQGKMLLHTEYSLLSLLHTQDGVVHHHGLFQDRTCEAVEDTESGRMVKKMKKRICLVLDCLCAHDFSDKTADLINLQHYVIKEKRLSERETVVIFYDVVRVVEALHQKNIVHRDLKLGNMVLNKRTHRITITNFCLGKHLVSEGDLLKDQRGSPAYISPDVLSGRPYRGKPSDMWALGVVLFTMLYGQFPFYDSIPQELFRKIKAAEYTIPEDGRVSENTVCLIRKLLVLDPQQRLAAADVLEALSAIIASWQSLSSLSGPLQVVPDIDDQMSSSDSSQEAKVTEECSQYEFENYMRQQLLLAEEKSSIHEARAWVPKRQFGSMPPVRRLGHDAQPMTSLDTAILAQRYLRK.

One can recognise a Protein kinase domain in the interval 35–332 (FILGPRLGNS…DVLEALSAII (298 aa)). ATP is bound by residues 41-49 (LGNSPVPSI) and K66. The Proton acceptor role is filled by D197.

This sequence belongs to the protein kinase superfamily. CAMK Ser/Thr protein kinase family.

Its subcellular location is the nucleus. It is found in the cytoplasm. It catalyses the reaction L-seryl-[protein] + ATP = O-phospho-L-seryl-[protein] + ADP + H(+). The enzyme catalyses L-threonyl-[protein] + ATP = O-phospho-L-threonyl-[protein] + ADP + H(+). Functionally, may be a negative regulator of NF-kappa-B and p53-mediated gene transcription. In Rattus norvegicus (Rat), this protein is Serine/threonine-protein kinase 40 (Stk40).